The primary structure comprises 447 residues: Tektin-4 (447 aa).

Coiled-coil stretches lie at residues 114 to 143, 324 to 348, and 375 to 423; these read KSEL…RALD, KILS…DKEA, and FRLM…TNSL.

Belongs to the tektin family. As to quaternary structure, microtubule inner protein component of sperm flagellar doublet microtubules. Ubiquitinated, leading to its degradation. Deubiquitinated by USP16, promoting its stability.

Its subcellular location is the cytoplasm. It is found in the cytoskeleton. It localises to the cilium axoneme. The protein localises to the flagellum axoneme. Its function is as follows. Microtubule inner protein (MIP) part of the dynein-decorated doublet microtubules (DMTs) in cilia and flagellar axoneme. Forms filamentous polymers in the walls of ciliary and flagellar microtubules. Contributes to normal sperm motility. The polypeptide is Tektin-4 (Tekt4) (Rattus norvegicus (Rat)).